A 143-amino-acid chain; its full sequence is Ribosome maturation factor RimP (143 aa).

Belongs to the RimP family.

It is found in the cytoplasm. Required for maturation of 30S ribosomal subunits. In Neisseria gonorrhoeae (strain ATCC 700825 / FA 1090), this protein is Ribosome maturation factor RimP.